The primary structure comprises 409 residues: Inactive serine protease 35 (409 aa).

Residues 1–20 form the signal peptide; sequence MENTLLWLVILIPGWALSDG. N-linked (GlcNAc...) asparagine glycosylation occurs at Asn-90. Residues 124–404 enclose the Peptidase S1 domain; it reads VYGTDSRFSI…ICLWIHGNAA (281 aa). Cys-154 and Cys-170 are joined by a disulfide. Over residues 188–207 the composition is skewed to basic residues; that stretch reads VLKMRNKGGRKKRRGSKRSR. The disordered stretch occupies residues 188-247; it reads VLKMRNKGGRKKRRGSKRSRREAESAGQSQAHLRESTTQRPGKKSRRGPRVTQGRPSFQW.

Belongs to the peptidase S1 family. In ovary, it localizes to the theca cells of pre-antral follicles, the theca and granulosa cells of pre-ovulatory and ovulatory follicles, as well as to the developing corpus luteum.

The protein resides in the secreted. The polypeptide is Inactive serine protease 35 (Prss35) (Mus musculus (Mouse)).